The primary structure comprises 143 residues: Hemoglobin cathodic subunit alpha (143 aa).

Ser-2 bears the N-acetylserine mark. The Globin domain occupies 2–143 (SLTAKDKTLV…VSAALADKYR (142 aa)). Residue His-59 participates in O2 binding. His-89 contacts heme b.

This sequence belongs to the globin family. As to quaternary structure, heterotetramer of two alpha chains and two beta chains. In terms of tissue distribution, red blood cells.

Involved in oxygen transport from the gills to the various peripheral tissues. This is Hemoglobin cathodic subunit alpha from Conger conger (Conger eel).